The primary structure comprises 273 residues: Nitrogenase iron protein (273 aa).

An ATP-binding site is contributed by 8 to 15 (GKGGIGKS). C95 is a [4Fe-4S] cluster binding site. R98 carries the ADP-ribosylarginine; by dinitrogenase reductase ADP-ribosyltransferase modification. C130 is a [4Fe-4S] cluster binding site.

Belongs to the NifH/BchL/ChlL family. Homodimer. [4Fe-4S] cluster is required as a cofactor. Post-translationally, the reversible ADP-ribosylation of Arg-98 inactivates the nitrogenase reductase and regulates nitrogenase activity.

It carries out the reaction N2 + 8 reduced [2Fe-2S]-[ferredoxin] + 16 ATP + 16 H2O = H2 + 8 oxidized [2Fe-2S]-[ferredoxin] + 2 NH4(+) + 16 ADP + 16 phosphate + 6 H(+). Functionally, the key enzymatic reactions in nitrogen fixation are catalyzed by the nitrogenase complex, which has 2 components: the iron protein and the molybdenum-iron protein. This Methanosarcina mazei (strain ATCC BAA-159 / DSM 3647 / Goe1 / Go1 / JCM 11833 / OCM 88) (Methanosarcina frisia) protein is Nitrogenase iron protein.